The chain runs to 358 residues: Phospho-N-acetylmuramoyl-pentapeptide-transferase (358 aa).

The next 10 membrane-spanning stretches (helical) occupy residues 27 to 47 (IYAMITALLVCFVLGPWVIRV), 73 to 93 (TMGGVMILAAIVIPTLLWADL), 97 to 117 (YIWTVLFITIGYGLIGFVDDY), 134 to 154 (MFWQVLLAGAVGTFLFLKPGF), 170 to 190 (LWFWYIPFVTLVIVGASNAVN), 197 to 217 (GLAIGPVAINAATYMLFSYVA), 233 to 253 (GAGELAVLCGAMVGAGLGFLW), 261 to 281 (VFMGDVGSLSLGGTLGAIAVI), 286 to 306 (ILLVIVGGIFVIEALSVIFQV), and 335 to 355 (KIIVRFWIITIILALVAISTL).

Belongs to the glycosyltransferase 4 family. MraY subfamily. It depends on Mg(2+) as a cofactor.

The protein resides in the cell inner membrane. The enzyme catalyses UDP-N-acetyl-alpha-D-muramoyl-L-alanyl-gamma-D-glutamyl-meso-2,6-diaminopimeloyl-D-alanyl-D-alanine + di-trans,octa-cis-undecaprenyl phosphate = di-trans,octa-cis-undecaprenyl diphospho-N-acetyl-alpha-D-muramoyl-L-alanyl-D-glutamyl-meso-2,6-diaminopimeloyl-D-alanyl-D-alanine + UMP. It functions in the pathway cell wall biogenesis; peptidoglycan biosynthesis. Catalyzes the initial step of the lipid cycle reactions in the biosynthesis of the cell wall peptidoglycan: transfers peptidoglycan precursor phospho-MurNAc-pentapeptide from UDP-MurNAc-pentapeptide onto the lipid carrier undecaprenyl phosphate, yielding undecaprenyl-pyrophosphoryl-MurNAc-pentapeptide, known as lipid I. This Pelobacter propionicus (strain DSM 2379 / NBRC 103807 / OttBd1) protein is Phospho-N-acetylmuramoyl-pentapeptide-transferase.